A 123-amino-acid chain; its full sequence is WAP four-disulfide core domain protein 5 (123 aa).

An N-terminal signal peptide occupies residues 1–24 (MRTQSLLLLGALLAVGSQLPAVFG). WAP domains are found at residues 27 to 74 (KGEK…VPRV) and 75 to 121 (SVKL…RDPA). 8 disulfide bridges follow: C34/C62, C41/C66, C49/C61, C55/C70, C81/C109, C88/C113, C96/C108, and C102/C117.

It is found in the secreted. Putative acid-stable proteinase inhibitor. This Gorilla gorilla gorilla (Western lowland gorilla) protein is WAP four-disulfide core domain protein 5 (WFDC5).